The chain runs to 418 residues: Hepatic and glial cell adhesion molecule (418 aa).

Residues 1–33 (MKRERGALSRASRALRLSPFVYLLLIQPVPLEG) form the signal peptide. The region spanning 34-142 (VNITSPVRLI…GEKTINLTVD (109 aa)) is the Ig-like V-type domain. Residues 34-240 (VNITSPVRLI…VKITVYRRSS (207 aa)) are Extracellular-facing. N-linked (GlcNAc...) asparagine glycosylation is found at N35, N138, N167, and N189. In terms of domain architecture, Ig-like C2-type spans 148–234 (PQVLVASTTV…QVRSLPVKIT (87 aa)). Cysteines 168 and 217 form a disulfide. A helical membrane pass occupies residues 241–261 (LYIILSTGGIFLLVTLVTVCA). The Cytoplasmic portion of the chain corresponds to 262 to 418 (CWKPSKKSRK…DESGQVEISA (157 aa)). The interval 271–418 (KKRKLEKQNS…DESGQVEISA (148 aa)) is disordered. Position 280 is a phosphoserine (S280). Over residues 287–308 (NDDRLKSEADTLPRSGEQERKN) the composition is skewed to basic and acidic residues. S321, S352, and S379 each carry phosphoserine. Residues 341 to 358 (GYSVSPPVPGRSPGLPIR) are compositionally biased toward low complexity. The span at 385 to 396 (SSPGRSRSSSRS) shows a compositional bias: low complexity.

Homodimer. Dimer formation occurs predominantly through cis interactions on the cell surface. Part of a complex containing MLC1, TRPV4, AQP4 and ATP1B1. Interacts with CLCN2. N-glycosylated.

It is found in the cytoplasm. It localises to the cell membrane. In terms of biological role, involved in regulating cell motility and cell-matrix interactions. May inhibit cell growth through suppression of cell proliferation. In glia, associates and targets CLCN2 at astrocytic processes and myelinated fiber tracts where it may regulate transcellular chloride flux involved in neuron excitability. The sequence is that of Hepatic and glial cell adhesion molecule from Mus musculus (Mouse).